A 438-amino-acid chain; its full sequence is Aspartate--tRNA(Asp) ligase (438 aa).

Glu170 provides a ligand contact to L-aspartate. The segment at 192–195 (QLYK) is aspartate. Residue Arg214 participates in L-aspartate binding. ATP contacts are provided by residues 214 to 216 (RAE), 222 to 224 (RHL), and Glu361. Positions 361 and 364 each coordinate Mg(2+). Ser364 and Arg368 together coordinate L-aspartate. Residue 409 to 412 (GAER) participates in ATP binding.

Belongs to the class-II aminoacyl-tRNA synthetase family. Type 2 subfamily. In terms of assembly, homodimer. It depends on Mg(2+) as a cofactor.

The protein localises to the cytoplasm. The catalysed reaction is tRNA(Asp) + L-aspartate + ATP = L-aspartyl-tRNA(Asp) + AMP + diphosphate. Functionally, catalyzes the attachment of L-aspartate to tRNA(Asp) in a two-step reaction: L-aspartate is first activated by ATP to form Asp-AMP and then transferred to the acceptor end of tRNA(Asp). This chain is Aspartate--tRNA(Asp) ligase, found in Pyrococcus abyssi (strain GE5 / Orsay).